Reading from the N-terminus, the 532-residue chain is Fe-S cluster assembly factor HCF101, chloroplastic (532 aa).

Residues 1–61 constitute a chloroplast transit peptide; the sequence is MPLLHPQSLR…RVSQNLSVAK (61 aa). An N-acetylalanine modification is found at Ala-62. Residue 184-191 participates in ATP binding; that stretch reads CKGGVGKS.

The protein belongs to the Mrp/NBP35 ATP-binding proteins family. [4Fe-4S] cluster serves as cofactor. As to expression, expressed in aerial tissues exposed to light. Very low expression in roots.

It localises to the plastid. The protein localises to the chloroplast stroma. Functionally, required for photosystem I (PSI) biosynthesis and assembly. May serve as a chloroplast scaffold protein that specifically assembles iron-sulfur (4Fe-4S) clusters and transfers them to the chloroplast PSI and ferredoxin-thioredoxin (FTR) complexes. Can assemble a 4Fe-4S cluster and transfer it to apoproteins in yeast cells. Probably not required for assembly or stability of plastidic 2Fe-2S clusters. The polypeptide is Fe-S cluster assembly factor HCF101, chloroplastic (HCF101) (Arabidopsis thaliana (Mouse-ear cress)).